A 467-amino-acid chain; its full sequence is Putative gluconeogenesis factor (467 aa).

Pro residues predominate over residues 1–12 (MSAPPAPPPDRS). Residues 1-27 (MSAPPAPPPDRSAPPDRTDSAQTEPTR) are disordered.

The protein belongs to the gluconeogenesis factor family.

The protein localises to the cytoplasm. Functionally, required for morphogenesis under gluconeogenic growth conditions. The protein is Putative gluconeogenesis factor of Deinococcus radiodurans (strain ATCC 13939 / DSM 20539 / JCM 16871 / CCUG 27074 / LMG 4051 / NBRC 15346 / NCIMB 9279 / VKM B-1422 / R1).